Here is a 135-residue protein sequence, read N- to C-terminus: uncharacterized protein (135 aa).

A disordered region spans residues 1–75 (MAAATETGQA…PPPRPPQRRC (75 aa)).

This is an uncharacterized protein from Homo sapiens (Human).